Consider the following 306-residue polypeptide: Galactosylgalactosylxylosylprotein 3-beta-glucuronosyltransferase I (306 aa).

Over 1 to 11 (MSEVRIRPRQV) the chain is Cytoplasmic. Residues 12-29 (LILIIVFLVVLMMVHRNG) traverse the membrane as a helical; Signal-anchor for type II membrane protein segment. At 30–306 (KRTCQGPEYL…GQRSDGGMEV (277 aa)) the chain is on the lumenal side. N-linked (GlcNAc...) asparagine glycosylation is present at asparagine 90. Residue aspartate 163 coordinates Mn(2+). Glutamate 252 functions as the Proton acceptor in the catalytic mechanism.

This sequence belongs to the glycosyltransferase 43 family. Mn(2+) serves as cofactor.

It localises to the golgi apparatus membrane. It catalyses the reaction 3-O-(beta-D-galactosyl-(1-&gt;3)-beta-D-galactosyl-(1-&gt;4)-beta-D-xylosyl)-L-seryl-[protein] + UDP-alpha-D-glucuronate = 3-O-(beta-D-GlcA-(1-&gt;3)-beta-D-Gal-(1-&gt;3)-beta-D-Gal-(1-&gt;4)-beta-D-Xyl)-L-seryl-[protein] + UDP + H(+). Its pathway is protein modification; protein glycosylation. Functionally, involved in the biosynthesis of L2/HNK-1 carbohydrate epitope on both glycolipids and glycoproteins. Shows strict specificity for Gal-beta-1,3-Gal-beta-1,4-Xyl, exhibiting negligible incorporation into other galactoside substrates. The polypeptide is Galactosylgalactosylxylosylprotein 3-beta-glucuronosyltransferase I (GlcAT-I) (Drosophila melanogaster (Fruit fly)).